The following is a 704-amino-acid chain: MANSKMAFLAFLAVSFLCGLVSATYKVGVGRADITGPPVEINFMGYANIKQVGRGIHTRVFARAFVVEDEKGNRVAFVSADAGMMGYGLKREVIKRLQARYGNIYHNDNVAISGTHTHGAPGGFLMHLLYDISILGFVPQTFEVMAQGLYLCIKRATDNLVDGRILLSKTTVLNVNINRSPSSYLRNPAEERAQYEHDTDKTLTQLRFVDLENNLLGAFNWYAVHATSMNNTNRLVTSDNVGYAALLLEKEYNPNKMPGKGKFVGAFCSSNLGDVSPNIMGPKCSISGNECDLLTSRCPTGEGDCFASGPGKDMFESTQILGQRLADAALGLLNEQSQESTAREVTGDVRFIHQFVDMPNYNGSTYNPLSRKVDKIRGCQPAMGYSFAAGTTDGPGAFSFEQGTTTDNPMWNFVRDFIAAPTQEDIKCHEPKPILLATGRATFPYEWQPKIVSDQLLKIGDVIIAAVPCEFTTMAGRRLRNQIRAAASAVGGIDTEVIIAGLTNIYTSYTVTPEEYQAQRYEAASTIFGPHTHSIYMDVFERLTKAMMRNETVDAGPSPPYMNDVMLSLNTGVLFDGHPINTDFGYVKSQPNKEYGINETVKVTYISGNPRNNLFTEKTYFTIERKINEDRWKVAYTDASWETKMVWHRTNTILGFSEMDIYWDISPQTLPGEYRIRHSGEYKYILGGKYPYEGLTHSFTVKED.

Residues 1–23 (MANSKMAFLAFLAVSFLCGLVSA) form the signal peptide. A glycan (N-linked (GlcNAc...) asparagine) is linked at Asn230. Ser276 serves as the catalytic Nucleophile. N-linked (GlcNAc...) asparagine glycosylation is found at Asn362, Asn550, and Asn598.

Belongs to the neutral ceramidase family. Post-translationally, N-glycosylated. Widely expressed in different tissues but enriched in neurons at all stages of development.

It localises to the secreted. The enzyme catalyses an N-acylsphing-4-enine + H2O = sphing-4-enine + a fatty acid. Functionally, hydrolyzes the sphingolipid ceramide into sphingosine and free fatty acid at an optimal pH of 6.5-7.5. Acts as a key regulator of sphingolipid signaling metabolites by generating sphingosine at the cell surface. Regulates synaptic vesicle exocytosis and trafficking by controlling presynaptic terminal sphingolipid composition. The chain is Neutral ceramidase (CDase) from Drosophila melanogaster (Fruit fly).